We begin with the raw amino-acid sequence, 377 residues long: tRNA-specific 2-thiouridylase MnmA (377 aa).

Residues 12–19 (GMSGGVDS) and M38 contribute to the ATP site. Residues 98 to 100 (NPD) are interaction with target base in tRNA. The active-site Nucleophile is the C103. A disulfide bridge links C103 with C200. G127 is an ATP binding site. The segment at 150 to 152 (KDQ) is interaction with tRNA. The Cysteine persulfide intermediate role is filled by C200. An interaction with tRNA region spans residues 314 to 315 (RY).

It belongs to the MnmA/TRMU family.

It is found in the cytoplasm. The catalysed reaction is S-sulfanyl-L-cysteinyl-[protein] + uridine(34) in tRNA + AH2 + ATP = 2-thiouridine(34) in tRNA + L-cysteinyl-[protein] + A + AMP + diphosphate + H(+). In terms of biological role, catalyzes the 2-thiolation of uridine at the wobble position (U34) of tRNA, leading to the formation of s(2)U34. In Limosilactobacillus fermentum (strain NBRC 3956 / LMG 18251) (Lactobacillus fermentum), this protein is tRNA-specific 2-thiouridylase MnmA.